The chain runs to 431 residues: Adenylosuccinate synthetase (431 aa).

GTP-binding positions include 13–19 (GDEGKGK) and 41–43 (GHT). D14 functions as the Proton acceptor in the catalytic mechanism. Positions 14 and 41 each coordinate Mg(2+). IMP-binding positions include 14–17 (DEGK), 39–42 (NAGH), T130, R144, Q225, T240, and R304. The Proton donor role is filled by H42. A substrate-binding site is contributed by 300 to 306 (AVTGRPR). Residues R306, 332–334 (KLD), and 415–417 (STG) contribute to the GTP site.

The protein belongs to the adenylosuccinate synthetase family. Homodimer. Mg(2+) is required as a cofactor.

Its subcellular location is the cytoplasm. The catalysed reaction is IMP + L-aspartate + GTP = N(6)-(1,2-dicarboxyethyl)-AMP + GDP + phosphate + 2 H(+). It functions in the pathway purine metabolism; AMP biosynthesis via de novo pathway; AMP from IMP: step 1/2. In terms of biological role, plays an important role in the de novo pathway of purine nucleotide biosynthesis. Catalyzes the first committed step in the biosynthesis of AMP from IMP. The protein is Adenylosuccinate synthetase of Legionella pneumophila (strain Lens).